Reading from the N-terminus, the 241-residue chain is Alkylated DNA repair protein ALKBH6 homolog (241 aa).

Residues 87–232 (AINHVLINEY…RVSLTCRLVP (146 aa)) form the Fe2OG dioxygenase domain. Fe cation-binding residues include His105, Asp107, and His181. The 2-oxoglutarate site is built by Arg223 and Arg229.

Belongs to the alkB family. The cofactor is Fe(2+).

The protein resides in the nucleus. In terms of biological role, probable RNA demethylase that binds to both N6-methyladenosine-containing- (m(6)A) and C5-methylcytidine-containing- (m(5)C) RNAs, thus being a probable m(6)A and m(5)C eraser. Involved in responses to abscisic acid (ABA) via the modulation of the expression of ABA signaling-related genes (e.g. ABI3 and ABI4). Acts as a negative regulator during seed germination under abiotic stresses (e.g. salt, cold and ABA). Positive modulator of seedling growth and survival in response to drought and heat, but counteracts tolerance to salt. This Arabidopsis thaliana (Mouse-ear cress) protein is Alkylated DNA repair protein ALKBH6 homolog.